The primary structure comprises 125 residues: Aspartate 1-decarboxylase 2 (125 aa).

S25 serves as the catalytic Schiff-base intermediate with substrate; via pyruvic acid. The residue at position 25 (S25) is a Pyruvic acid (Ser). Substrate is bound at residue T57. Residue Y58 is the Proton donor of the active site. Residue 73–75 (GAA) participates in substrate binding.

Belongs to the PanD family. As to quaternary structure, heterooctamer of four alpha and four beta subunits. Pyruvate is required as a cofactor. In terms of processing, is synthesized initially as an inactive proenzyme, which is activated by self-cleavage at a specific serine bond to produce a beta-subunit with a hydroxyl group at its C-terminus and an alpha-subunit with a pyruvoyl group at its N-terminus.

The protein resides in the cytoplasm. The catalysed reaction is L-aspartate + H(+) = beta-alanine + CO2. The protein operates within cofactor biosynthesis; (R)-pantothenate biosynthesis; beta-alanine from L-aspartate: step 1/1. Its function is as follows. Catalyzes the pyruvoyl-dependent decarboxylation of aspartate to produce beta-alanine. This chain is Aspartate 1-decarboxylase 2, found in Gloeobacter violaceus (strain ATCC 29082 / PCC 7421).